The following is a 160-amino-acid chain: Cytochrome c-type biogenesis protein CcmE (160 aa).

Residues 1–7 lie on the Cytoplasmic side of the membrane; sequence MTRKQRR. Residues 8–28 form a helical; Signal-anchor for type II membrane protein membrane-spanning segment; sequence LFMIFGALGTLGVAVGLILFA. Residues 29–160 lie on the Periplasmic side of the membrane; the sequence is LSDNIVFFYG…TQGAAAPLIR (132 aa). Residues histidine 122 and tyrosine 126 each contribute to the heme site. The interval 140–160 is disordered; it reads VWQEDGQAKPATQGAAAPLIR.

This sequence belongs to the CcmE/CycJ family.

The protein resides in the cell inner membrane. In terms of biological role, heme chaperone required for the biogenesis of c-type cytochromes. Transiently binds heme delivered by CcmC and transfers the heme to apo-cytochromes in a process facilitated by CcmF and CcmH. The sequence is that of Cytochrome c-type biogenesis protein CcmE from Beijerinckia indica subsp. indica (strain ATCC 9039 / DSM 1715 / NCIMB 8712).